The primary structure comprises 119 residues: Large ribosomal subunit protein uL22 (119 aa).

It belongs to the universal ribosomal protein uL22 family. In terms of assembly, part of the 50S ribosomal subunit.

Its function is as follows. This protein binds specifically to 23S rRNA; its binding is stimulated by other ribosomal proteins, e.g. L4, L17, and L20. It is important during the early stages of 50S assembly. It makes multiple contacts with different domains of the 23S rRNA in the assembled 50S subunit and ribosome. In terms of biological role, the globular domain of the protein is located near the polypeptide exit tunnel on the outside of the subunit, while an extended beta-hairpin is found that lines the wall of the exit tunnel in the center of the 70S ribosome. The sequence is that of Large ribosomal subunit protein uL22 from Rickettsia canadensis (strain McKiel).